We begin with the raw amino-acid sequence, 643 residues long: E3 ubiquitin-protein ligase Praja-1 (643 aa).

The tract at residues 1–363 (MGQESSKPVW…SDDYYKYCDE (363 aa)) is disordered. Composition is skewed to basic and acidic residues over residues 95 to 105 (DYSRYPPREYR), 145 to 158 (KFKD…EKGA), and 173 to 183 (RDVREERDKLD). Low complexity predominate over residues 200 to 209 (QSSVASQSSS). Basic and acidic residues predominate over residues 213-227 (LATKGDSSERERREQ). The residue at position 265 (S265) is a Phosphoserine. T277 is subject to Phosphothreonine. 2 stretches are compositionally biased toward basic and acidic residues: residues 289–310 (RWRD…RGRG) and 320–362 (KYPE…KYCD). S365 and S367 each carry phosphoserine. The segment at 380–454 (RSREQTLSSS…REPSLQEEQA (75 aa)) is disordered. Positions 410–439 (SASTGTSPGPGASASAGAGAGASAGSNGSN) are enriched in low complexity. An RING-type zinc finger spans residues 595–636 (CPICCSEYVKGEVATELPCHHYFHKPCVSIWLQKSGTCPVCR).

In terms of assembly, binds ubiquitin-conjugating enzymes (E2s). In vitro, interacts with the ubiquitin-conjugating enzyme, UBE2D2. Post-translationally, substrate for E2-dependent ubiquitination. As to expression, expressed in various regions of the brain including the cerebellum, cerebral cortex, medulla, occipital pole, frontal lobe, temporal lobe and putamen. Highest levels in the cerebral cortex.

It catalyses the reaction S-ubiquitinyl-[E2 ubiquitin-conjugating enzyme]-L-cysteine + [acceptor protein]-L-lysine = [E2 ubiquitin-conjugating enzyme]-L-cysteine + N(6)-ubiquitinyl-[acceptor protein]-L-lysine.. Has E2-dependent E3 ubiquitin-protein ligase activity. Ubiquitinates MAGED1 antigen leading to its subsequent degradation by proteasome. May be involved in protein sorting. This chain is E3 ubiquitin-protein ligase Praja-1 (PJA1), found in Homo sapiens (Human).